The primary structure comprises 203 residues: 5-formyltetrahydrofolate cyclo-ligase (203 aa).

Ala-2 carries the post-translational modification N-acetylalanine. Residues 10–14 (KRSLR) and Arg-14 each bind ATP. Residues Leu-56, Glu-61, and 148–152 (RGKGY) each bind substrate. 145 to 153 (RLGRGKGYY) contacts ATP. Positions 154 and 189 each coordinate Mg(2+).

Belongs to the 5-formyltetrahydrofolate cyclo-ligase family. In terms of assembly, monomer. The cofactor is Mg(2+).

It localises to the cytoplasm. The enzyme catalyses (6S)-5-formyl-5,6,7,8-tetrahydrofolate + ATP = (6R)-5,10-methenyltetrahydrofolate + ADP + phosphate. Functionally, contributes to tetrahydrofolate metabolism. Helps regulate carbon flow through the folate-dependent one-carbon metabolic network that supplies carbon for the biosynthesis of purines, thymidine and amino acids. Catalyzes the irreversible conversion of 5-formyltetrahydrofolate (5-FTHF) to yield 5,10-methenyltetrahydrofolate. The sequence is that of 5-formyltetrahydrofolate cyclo-ligase (MTHFS) from Homo sapiens (Human).